The sequence spans 361 residues: Phospho-N-acetylmuramoyl-pentapeptide-transferase (361 aa).

A run of 10 helical transmembrane segments spans residues 28-48 (LAVLVTLSLSFLIGPRLIKFL), 74-94 (TMGGIMIILSSCFSTLLLADL), 99-119 (IWITLFGFVSFSIIGFLDDYA), 135-155 (LLLQGIISLIVCILLEYTIDS), 167-187 (SLSMDLGYLYIFFAIFVIVGA), 203-223 (VPIALTAGSFALISYLVGNLI), 236-256 (TGELTIFCASIVGSCLGFLWF), 263-283 (VFMGDTGSLSLGGVLGIISVI), 288-308 (IVLGIVGGLFVIETISVIMQV), and 338-358 (KVVIRFWIISLIFVLIGLSSL).

Belongs to the glycosyltransferase 4 family. MraY subfamily. Mg(2+) is required as a cofactor.

The protein localises to the cell inner membrane. The catalysed reaction is UDP-N-acetyl-alpha-D-muramoyl-L-alanyl-gamma-D-glutamyl-meso-2,6-diaminopimeloyl-D-alanyl-D-alanine + di-trans,octa-cis-undecaprenyl phosphate = di-trans,octa-cis-undecaprenyl diphospho-N-acetyl-alpha-D-muramoyl-L-alanyl-D-glutamyl-meso-2,6-diaminopimeloyl-D-alanyl-D-alanine + UMP. Its pathway is cell wall biogenesis; peptidoglycan biosynthesis. Its function is as follows. Catalyzes the initial step of the lipid cycle reactions in the biosynthesis of the cell wall peptidoglycan: transfers peptidoglycan precursor phospho-MurNAc-pentapeptide from UDP-MurNAc-pentapeptide onto the lipid carrier undecaprenyl phosphate, yielding undecaprenyl-pyrophosphoryl-MurNAc-pentapeptide, known as lipid I. The polypeptide is Phospho-N-acetylmuramoyl-pentapeptide-transferase (Rickettsia bellii (strain OSU 85-389)).